A 308-amino-acid polypeptide reads, in one-letter code: Pantothenate kinase (308 aa).

An ATP-binding site is contributed by 91 to 98; that stretch reads GSVAVGKS.

Belongs to the prokaryotic pantothenate kinase family.

Its subcellular location is the cytoplasm. It carries out the reaction (R)-pantothenate + ATP = (R)-4'-phosphopantothenate + ADP + H(+). Its pathway is cofactor biosynthesis; coenzyme A biosynthesis; CoA from (R)-pantothenate: step 1/5. This is Pantothenate kinase from Lacticaseibacillus paracasei (strain ATCC 334 / BCRC 17002 / CCUG 31169 / CIP 107868 / KCTC 3260 / NRRL B-441) (Lactobacillus paracasei).